We begin with the raw amino-acid sequence, 367 residues long: Dihydroorotate dehydrogenase (quinone) (367 aa).

Residues 61–65 (AGFDK) and Thr85 contribute to the FMN site. Residue Lys65 participates in substrate binding. 110–114 (NRMGF) is a binding site for substrate. Asn138 and Asn169 together coordinate FMN. Residue Asn169 coordinates substrate. The Nucleophile role is filled by Ser172. Position 174 (Asn174) interacts with substrate. Residues Lys212 and Thr240 each contribute to the FMN site. Residue 241-242 (NT) participates in substrate binding. Residues Gly263, Gly292, and 313–314 (YS) contribute to the FMN site.

This sequence belongs to the dihydroorotate dehydrogenase family. Type 2 subfamily. As to quaternary structure, monomer. FMN serves as cofactor.

The protein resides in the cell membrane. It carries out the reaction (S)-dihydroorotate + a quinone = orotate + a quinol. It participates in pyrimidine metabolism; UMP biosynthesis via de novo pathway; orotate from (S)-dihydroorotate (quinone route): step 1/1. Catalyzes the conversion of dihydroorotate to orotate with quinone as electron acceptor. The chain is Dihydroorotate dehydrogenase (quinone) from Rhodospirillum rubrum (strain ATCC 11170 / ATH 1.1.1 / DSM 467 / LMG 4362 / NCIMB 8255 / S1).